The sequence spans 335 residues: Hsp90 co-chaperone Cdc37-like 1 (335 aa).

Over residues 1 to 11 (MEQPWPPPGPW) the composition is skewed to pro residues. A disordered region spans residues 1-42 (MEQPWPPPGPWSFPRTGGETEEESDLDVSPSSSHYSPVPDGG). Residues 2–170 (EQPWPPPGPW…YEQKIRHFGM (169 aa)) are self-association. The span at 27 to 40 (DVSPSSSHYSPVPD) shows a compositional bias: low complexity. Phosphoserine is present on residues Ser-32 and Ser-88. The stretch at 84–120 (HNSESLDQEHAKAQTAVSELRQREEEWRQKEEALVQR) forms a coiled coil. Residues 147–276 (KTEEEDKSQS…SRVRLYAQSQ (130 aa)) form a self-association and interaction with Hsp90 region. The interval 266–335 (KSRVRLYAQS…EDDDRMMDTV (70 aa)) is interaction with Hsp70. The interval 277-335 (SLQPVTVQNHVPHSGVGCIGSLESLPQNPDSLQCCTPAPLCSVDSVVHKEDDDRMMDTV) is required for interaction with STIP1.

It belongs to the CDC37 family. Self-associates. Forms complexes with Hsp70 and Hsp90. Interacts with CDC37, FKBP4, PPID and STIP1.

It is found in the cytoplasm. Functionally, co-chaperone that binds to numerous proteins and promotes their interaction with Hsp70 and Hsp90. This Mus musculus (Mouse) protein is Hsp90 co-chaperone Cdc37-like 1 (Cdc37l1).